The primary structure comprises 396 residues: Flavohemoprotein (396 aa).

Residues 1–136 (MLDAQTIATV…LANVFINREA (136 aa)) form the Globin domain. Residue H85 participates in heme b binding. Residues Y95 and E135 each act as charge relay system in the active site. The tract at residues 147-396 (GGWEGTRDFR…YECFGPHKVL (250 aa)) is reductase. The FAD-binding FR-type domain occupies 150–255 (EGTRDFRIVA…VAPAGDFFMA (106 aa)). Residues Y188 and 204 to 207 (RQYS) contribute to the FAD site. 268 to 273 (GVGQTP) serves as a coordination point for NADP(+). 389–392 (CFGP) contributes to the FAD binding site.

The protein belongs to the globin family. Two-domain flavohemoproteins subfamily. This sequence in the C-terminal section; belongs to the flavoprotein pyridine nucleotide cytochrome reductase family. It depends on heme b as a cofactor. FAD serves as cofactor.

The catalysed reaction is 2 nitric oxide + NADPH + 2 O2 = 2 nitrate + NADP(+) + H(+). It catalyses the reaction 2 nitric oxide + NADH + 2 O2 = 2 nitrate + NAD(+) + H(+). In terms of biological role, is involved in NO detoxification in an aerobic process, termed nitric oxide dioxygenase (NOD) reaction that utilizes O(2) and NAD(P)H to convert NO to nitrate, which protects the bacterium from various noxious nitrogen compounds. Therefore, plays a central role in the inducible response to nitrosative stress. This is Flavohemoprotein from Escherichia coli O6:H1 (strain CFT073 / ATCC 700928 / UPEC).